The chain runs to 304 residues: MGRRKKGRAVSGWIVIDKPAGLSSNAVVGKVRWAFDAQKAGHAGTLDPEATGVLAIALGEATKTVPFVTDALKAYEFTVRLGQATNTDDGEGEVTETSDARPSDDEIRAALPPFEGDILQVPPQFSAVKIDGERAYARARAGQEMEIAARPLYVDSLTFIARPDPDHVTLEMVCGKGGYVRSIARDLGRALGCFGHVKSLRRTWSGPFELSDATPLETLEDLAKDPALDAHLMPLETGLADLPELPCTPEGAARMRNGNPGMVRASDAEYGETAWASYNGTAVAVGTYRAGELHPTRVFQHGAL.

The active-site Nucleophile is the Asp47. A disordered region spans residues 85–105 (TNTDDGEGEVTETSDARPSDD).

The protein belongs to the pseudouridine synthase TruB family. Type 1 subfamily.

It carries out the reaction uridine(55) in tRNA = pseudouridine(55) in tRNA. In terms of biological role, responsible for synthesis of pseudouridine from uracil-55 in the psi GC loop of transfer RNAs. This Dinoroseobacter shibae (strain DSM 16493 / NCIMB 14021 / DFL 12) protein is tRNA pseudouridine synthase B.